Here is a 349-residue protein sequence, read N- to C-terminus: uncharacterized protein (349 aa).

Transmembrane regions (helical) follow at residues 15–35 (VHSP…NPVT), 53–73 (ISFC…MILI), 91–111 (WFLL…LMFS), 120–140 (NVVL…ILLL), 147–167 (LSMV…FWGV), 179–199 (FGLG…TTIL), 218–238 (LLGT…DHFM), 248–268 (WMLI…LAGL), 276–296 (INLA…LILL), and 302–322 (AQYL…IDNL). EamA domains are found at residues 39-164 (IELG…VTVF) and 191-319 (FISA…LSFI).

The protein belongs to the EamA transporter family.

The protein resides in the cell membrane. This is an uncharacterized protein from Synechocystis sp. (strain ATCC 27184 / PCC 6803 / Kazusa).